Here is a 423-residue protein sequence, read N- to C-terminus: Cop9 signalosome complex subunit 12 (423 aa).

The PCI domain maps to 232 to 418 (GFFHLNEALL…RCIVFSKKEP (187 aa)).

It belongs to the CSN12 family. Component of a COP9 signalosome-like (CSN) complex, composed of RRI1/CSN5, CSN9, RRI2/CSN10, PCI8/CSN11, CSN12 and CSI1. In the complex, it probably interacts directly with RRI1/CSN5, CSN9, RRI2/CSN10 and CSI1. Interacts with SEM1 and THP3.

Its subcellular location is the cytoplasm. It is found in the nucleus. Component of the COP9 signalosome (CSN) complex that acts as an regulator of the ubiquitin (Ubl) conjugation pathway by mediating the deneddylation of the cullin subunit of SCF-type E3 ubiquitin-protein ligase complexes. The CSN complex is involved in the regulation of the mating pheromone response. CSN12 forms a complex with THP3 that is recruited to transcribed genes and required for transcription elongation. In Saccharomyces cerevisiae (strain ATCC 204508 / S288c) (Baker's yeast), this protein is Cop9 signalosome complex subunit 12 (CSN12).